A 304-amino-acid chain; its full sequence is Acetylglutamate kinase (304 aa).

Substrate is bound by residues 82-83 (GG), arginine 104, and asparagine 197.

The protein belongs to the acetylglutamate kinase family. ArgB subfamily.

It localises to the cytoplasm. The catalysed reaction is N-acetyl-L-glutamate + ATP = N-acetyl-L-glutamyl 5-phosphate + ADP. Its pathway is amino-acid biosynthesis; L-arginine biosynthesis; N(2)-acetyl-L-ornithine from L-glutamate: step 2/4. Functionally, catalyzes the ATP-dependent phosphorylation of N-acetyl-L-glutamate. This is Acetylglutamate kinase from Prochlorococcus marinus (strain NATL2A).